A 243-amino-acid chain; its full sequence is HTH-type transcriptional repressor NagR (243 aa).

Residues 9–77 (IPIYYQIMEQ…KGRGTFVSKP (69 aa)) enclose the HTH gntR-type domain. Positions 37–56 (EREYAEQFGISRMTVRQALS) form a DNA-binding region, H-T-H motif. Alpha-D-glucosamine 6-phosphate-binding positions include 89–90 (FT), 133–135 (RVR), Glu145, 165–167 (SIY), Glu222, and Tyr228. Residues 89–90 (FT), 133–135 (RVR), Glu145, 165–167 (SIY), Glu222, and Tyr228 contribute to the N-acetyl-D-glucosamine 6-phosphate site.

Homodimer. Forms dimers via the C-terminal effector-binding domain. At high concentrations, probably forms polymers along the DNA.

Binding to DNA is allosterically inhibited by an effector molecule. Binding of the effector to the C-terminal domain leads to a conformational change that modulates binding to DNA and thereby regulates transcription of the target genes. Glucosamine-6-phosphate (GlcN6P) and/or N-acetylglucosamine-6-phosphate (GlcNAc6P) are putative effectors of NagR. Binding of GlcNAc6P may prevent the protein-protein interactions responsible for polymerization along the DNA, but not the specific DNA binding. In terms of biological role, main transcriptional repressor of genes involved in N-acetylglucosamine (GlcNAc) transport and utilization. Represses the expression of the nagAB and nagP operons by binding directly within their upstream regions. Binds to the DNA consensus sequence 5'-ATTGGTATAGACAACT-3'. Also acts as a weak repressor of mapB expression. The protein is HTH-type transcriptional repressor NagR of Bacillus subtilis (strain 168).